A 382-amino-acid polypeptide reads, in one-letter code: Gap junction alpha-1 protein (382 aa).

Topologically, residues 2 to 23 are cytoplasmic; that stretch reads GDWSALGKLLDKVQAYSTAGGK. Ser-5 carries the post-translational modification Phosphoserine. A helical transmembrane segment spans residues 24–44; the sequence is VWLSVLFIFRILLLGTAVESA. Over 45-76 the chain is Extracellular; sequence WGDEQSAFRCNTQQPGCENVCYDKSFPISHVR. 2 disulfides stabilise this stretch: Cys-54/Cys-192 and Cys-187/Cys-198. A helical membrane pass occupies residues 77–97; that stretch reads FWVLQIIFVSVPTLLYLAHVF. The Cytoplasmic portion of the chain corresponds to 98-155; it reads YVMRKEEKLNKKEEELKVAQTDGVNVEMHLKQIEIKKFKYGIEEHGKVKMRGGLLRTY. Lys-144 participates in a covalent cross-link: Glycyl lysine isopeptide (Lys-Gly) (interchain with G-Cter in SUMO). Residues 156–176 traverse the membrane as a helical segment; the sequence is IISILFKSIFEVAFLLIQWYI. Over 177–207 the chain is Extracellular; sequence YGFSLSAVYTCKRDPCPHQVDCFLSRPTEKT. Residues 208-228 traverse the membrane as a helical segment; that stretch reads IFIIFMLVVSLVSLALNIIEL. Residues 229 to 382 lie on the Cytoplasmic side of the membrane; the sequence is FYVFFKGVKD…SRPRPDDLEI (154 aa). Lys-237 is covalently cross-linked (Glycyl lysine isopeptide (Lys-Gly) (interchain with G-Cter in SUMO)). Positions 244-382 are interaction with NOV; it reads SDPYHTTSGA…SRPRPDDLEI (139 aa). Tyr-247 carries the post-translational modification Phosphotyrosine. Phosphoserine is present on residues Ser-255 and Ser-262. Residues 264-382 are interaction with UBQLN4; the sequence is KYAYFNGCSS…SRPRPDDLEI (119 aa). An S-nitrosocysteine modification is found at Cys-271. The residue at position 275 (Thr-275) is a Phosphothreonine. 2 positions are modified to phosphoserine: Ser-306 and Ser-314. Positions 317–332 are enriched in polar residues; the sequence is QNRMGQAGSTISNSHA. Residues 317-382 form a disordered region; the sequence is QNRMGQAGST…SRPRPDDLEI (66 aa). Ser-325 carries the phosphoserine; by CK1 modification. Position 326 is a phosphothreonine (Thr-326). Ser-328 and Ser-330 each carry phosphoserine; by CK1. 2 positions are modified to phosphoserine: Ser-344 and Ser-365. The span at 362–374 shows a compositional bias: low complexity; the sequence is RPSSRASSRASSR. Ser-368 carries the phosphoserine; by PKC/PRKCG and PKC/PRKCD modification. Phosphoserine is present on residues Ser-369 and Ser-373.

Belongs to the connexin family. Alpha-type (group II) subfamily. In terms of assembly, a connexon is composed of a hexamer of connexins. Interacts with SGSM3. Interacts with RIC1/CIP150. Interacts with CNST and CSNK1D. Interacts (via C-terminus) with TJP1. Interacts (via C-terminus) with SRC (via SH3 domain). Interacts (not ubiquitinated) with UBQLN4 (via UBA domain). Interacts with NOV. Interacts with TMEM65. Interacts with ANK3/ANKG and PKP2. Post-translationally, phosphorylation at Ser-325, Ser-328 and Ser-330 by CK1 modulates gap junction assembly. Phosphorylated at Ser-368 by PRKCG; phosphorylation induces disassembly of gap junction plaques and inhibition of gap junction activity. Phosphorylation at Ser-368 by PRKCD triggers its internalization into small vesicles leading to proteasome-mediated degradation. In terms of processing, sumoylated with SUMO1, SUMO2 and SUMO3, which may regulate the level of functional Cx43 gap junctions at the plasma membrane. May be desumoylated by SENP1 or SENP2. S-nitrosylation at Cys-271 is enriched at the muscle endothelial gap junction in arteries, it augments channel permeability and may regulate of smooth muscle cell to endothelial cell communication. Post-translationally, acetylated in the developing cortex; leading to delocalization from the cell membrane.

It localises to the cell membrane. It is found in the cell junction. Its subcellular location is the gap junction. The protein localises to the endoplasmic reticulum. Gap junction protein that acts as a regulator of bladder capacity. A gap junction consists of a cluster of closely packed pairs of transmembrane channels, the connexons, through which materials of low MW diffuse from one cell to a neighboring cell. May play a critical role in the physiology of hearing by participating in the recycling of potassium to the cochlear endolymph. Negative regulator of bladder functional capacity: acts by enhancing intercellular electrical and chemical transmission, thus sensitizing bladder muscles to cholinergic neural stimuli and causing them to contract. May play a role in cell growth inhibition through the regulation of NOV expression and localization. Plays an essential role in gap junction communication in the ventricles. This chain is Gap junction alpha-1 protein (GJA1), found in Chlorocebus aethiops (Green monkey).